A 302-amino-acid polypeptide reads, in one-letter code: Dioxygenase olcK (302 aa).

Residues histidine 136, aspartate 138, and histidine 213 each coordinate Fe cation.

The protein belongs to the PhyH family. As to quaternary structure, homodimer. It depends on Fe cation as a cofactor.

The protein localises to the peroxisome matrix. It functions in the pathway secondary metabolite biosynthesis; terpenoid biosynthesis. In terms of biological role, dioxygenase; part of the gene cluster that mediates the biosynthesis of 15-deoxyoxalicine B. The first step of the pathway is the synthesis of nicotinyl-CoA from nicotinic acid by the nicotinic acid-CoA ligase olcI. Nicotinyl-CoA is then a substrate of polyketide synthase olcA to produce 4-hydroxy-6-(3-pyridinyl)-2H-pyran-2-one (HPPO) which is further prenylated by the polyprenyl transferase olcH to yield geranylgeranyl-HPPO. Geranylgeranyl pyrophosphate is provided by the cluster-specific geranylgeranyl pyrophosphate synthase olcC. The FAD-dependent monooxygenase olcE catalyzes the epoxidation of geranylgeranyl-HPPO and the terpene cyclase olcD catalyzes the cyclization of the terpenoid component, resulting in the formation of the tricyclic terpene moiety seen in predecaturin E. The cytochrome P450 monooxygenase then catalyzes the allylic oxidation of predecaturin E, which is followed by spirocylization with concomitant loss of one molecule of water to form decaturin E. Decaturin E is the substrate of the cytochrome P450 monooxygenase olcJ which hydroxylates it at the C-29 position to form decaturin F. The short-chain dehydrogenase/reductase olcF may catalyze the oxidation of decaturin F to generate the 29-hydroxyl-27-one intermediate, and subsequent hemiacetal formation probably leads to the formation of decaturin C. The dioxygenase olcK may be a peroxisomal enzyme that catalyzes the hydroxylation of decaturin C into decaturin A once decaturin C is shuttled into the peroxisome by the MFS transporter olcL. Finally the cytochrome P450 monooxygenase olcB catalyzes the oxidative rearrangement to yield 15-deoxyoxalicine B. In the absence of olcJ, decaturin E may be shunted to a pathway in which it is oxidized to a ketone, possibly by olcF, to form decaturin D, which undergoes further allylic oxidation to yield decaturin G. Moreover, in the absence of oclK or oclL, oclB can convert decaturin C into 15-deoxyoxalicine A. This Penicillium canescens protein is Dioxygenase olcK.